Consider the following 342-residue polypeptide: Foldase protein PrsA (342 aa).

The N-terminal stretch at 1 to 22 (MVSVKKIVASALVGVLMFSAVG) is a signal peptide. Residue Cys-23 is the site of N-palmitoyl cysteine attachment. A lipid anchor (S-diacylglycerol cysteine) is attached at Cys-23. The region spanning 189-284 (DSGVLTKHLL…FGYHIIQAGA (96 aa)) is the PpiC domain.

Belongs to the PrsA family.

It localises to the cell membrane. The enzyme catalyses [protein]-peptidylproline (omega=180) = [protein]-peptidylproline (omega=0). Its function is as follows. Plays a major role in protein secretion by helping the post-translocational extracellular folding of several secreted proteins. The protein is Foldase protein PrsA of Clostridium perfringens (strain 13 / Type A).